Here is a 355-residue protein sequence, read N- to C-terminus: Glutamine synthetase root isozyme 4 (355 aa).

The GS beta-grasp domain occupies 19 to 99 (IIAEYIWIGG…VMCDCYTPAG (81 aa)). The tract at residues 37–66 (ARTLPGPVTDPSKLPKWNYDGSSTGQAPGE) is disordered. Residues 106–355 (KRYSAAKIFS…IAETTIVWKP (250 aa)) form the GS catalytic domain.

The protein belongs to the glutamine synthetase family. In terms of assembly, homooctamer. In terms of tissue distribution, found in all the tissues examined with higher expression found in tissues of the root, stem and seedling shoot.

It is found in the cytoplasm. It carries out the reaction L-glutamate + NH4(+) + ATP = L-glutamine + ADP + phosphate + H(+). Functionally, plays a role in the flow of nitrogen into nitrogenous organic compounds. This chain is Glutamine synthetase root isozyme 4 (GLN5), found in Zea mays (Maize).